The primary structure comprises 418 residues: Nickel and cobalt resistance protein CnrC (418 aa).

Positions 1–29 are cleaved as a signal peptide; the sequence is MKQVISSFLCRPRFVGSAIWLLPVALSHA.

This sequence belongs to the outer membrane factor (OMF) (TC 1.B.17) family.

Functionally, the products of the genes cnrA, cnrB, and cnrC are likely to form a membrane-bound protein complex catalyzing an energy-dependent efflux of Ni(2+) and Co(2+). The mechanism of action of the CnrCBA complex may be that of a proton/cation antiporter. This chain is Nickel and cobalt resistance protein CnrC (cnrC), found in Cupriavidus metallidurans (strain ATCC 43123 / DSM 2839 / NBRC 102507 / CH34) (Ralstonia metallidurans).